We begin with the raw amino-acid sequence, 180 residues long: GTP cyclohydrolase 1 (180 aa).

Cys71, His74, and Cys142 together coordinate Zn(2+).

Belongs to the GTP cyclohydrolase I family. Toroid-shaped homodecamer, composed of two pentamers of five dimers.

The enzyme catalyses GTP + H2O = 7,8-dihydroneopterin 3'-triphosphate + formate + H(+). The protein operates within cofactor biosynthesis; 7,8-dihydroneopterin triphosphate biosynthesis; 7,8-dihydroneopterin triphosphate from GTP: step 1/1. The sequence is that of GTP cyclohydrolase 1 (folE) from Helicobacter pylori (strain ATCC 700392 / 26695) (Campylobacter pylori).